The chain runs to 259 residues: Ribonuclease HII (259 aa).

In terms of domain architecture, RNase H type-2 spans 70–258; sequence TLIVGIDEVG…VKSLVLGKKE (189 aa). A divalent metal cation-binding residues include aspartate 76, glutamate 77, and aspartate 168.

Belongs to the RNase HII family. It depends on Mn(2+) as a cofactor. The cofactor is Mg(2+).

Its subcellular location is the cytoplasm. The catalysed reaction is Endonucleolytic cleavage to 5'-phosphomonoester.. Its function is as follows. Endonuclease that specifically degrades the RNA of RNA-DNA hybrids. This Streptococcus pneumoniae serotype 2 (strain D39 / NCTC 7466) protein is Ribonuclease HII.